Here is a 210-residue protein sequence, read N- to C-terminus: Heart- and neural crest derivatives-expressed protein 2 (210 aa).

Positions 81 to 101 (SGAGGLMQRPVKRRGTANRKE) are disordered. Residues 90 to 101 (PVKRRGTANRKE) are compositionally biased toward basic residues. Residues 92–144 (KRRGTANRKERRRTISINSAFAELRECIPNVPADTKLSKIKTLRLATSYIAYL) enclose the bHLH domain.

As to quaternary structure, efficient DNA binding requires dimerization with another bHLH protein. In terms of tissue distribution, heart, liver and spleen.

It localises to the nucleus. Its function is as follows. Essential for cardiac morphogenesis and for the development of branchial arches. Binds DNA on E-box consensus sequence 5'-CANNTG-3'. This is Heart- and neural crest derivatives-expressed protein 2 (hand2) from Xenopus laevis (African clawed frog).